The sequence spans 284 residues: tRNA pseudouridine synthase A (284 aa).

Catalysis depends on D62, which acts as the Nucleophile. Y123 is a binding site for substrate.

The protein belongs to the tRNA pseudouridine synthase TruA family. As to quaternary structure, homodimer.

The enzyme catalyses uridine(38/39/40) in tRNA = pseudouridine(38/39/40) in tRNA. In terms of biological role, formation of pseudouridine at positions 38, 39 and 40 in the anticodon stem and loop of transfer RNAs. In Streptomyces griseus subsp. griseus (strain JCM 4626 / CBS 651.72 / NBRC 13350 / KCC S-0626 / ISP 5235), this protein is tRNA pseudouridine synthase A.